Here is a 362-residue protein sequence, read N- to C-terminus: Protein U8 (362 aa).

It belongs to the herpesviridae US22 family.

The sequence is that of Protein U8 (U8) from Human herpesvirus 7 (strain JI) (HHV-7).